Reading from the N-terminus, the 126-residue chain is Protein ApaG (126 aa).

Positions 2 to 126 constitute an ApaG domain; it reads SQLTSSVRVD…FRLSIPGLLH (125 aa).

The protein is Protein ApaG of Shewanella halifaxensis (strain HAW-EB4).